Reading from the N-terminus, the 1994-residue chain is Protein-methionine sulfoxide oxidase mical3a (1994 aa).

The interval G2–R498 is monooxygenase domain. FAD-binding positions include C101, C101–N129, E120, R122, R127, N129, and D402. In terms of domain architecture, Calponin-homology (CH) spans I521 to K627. The disordered stretch occupies residues I666–R708. Basic and acidic residues predominate over residues D674–G684. An LIM zinc-binding domain is found at D772–G834. Disordered stretches follow at residues P843–T900, E917–R1064, S1176–K1263, L1281–V1476, V1493–A1555, and K1598–R1747. Composition is skewed to acidic residues over residues E917 to T926 and S951 to E961. The segment covering E975 to S987 has biased composition (basic and acidic residues). 2 stretches are compositionally biased toward acidic residues: residues G1001–A1037 and P1046–E1060. The span at P1200–C1215 shows a compositional bias: polar residues. Composition is skewed to basic and acidic residues over residues R1249–K1263 and E1287–I1297. Composition is skewed to low complexity over residues K1299–E1314 and S1358–S1368. Polar residues predominate over residues V1369–T1389. A compositionally biased stretch (pro residues) spans P1437–N1458. The span at R1464–V1476 shows a compositional bias: basic and acidic residues. A compositionally biased stretch (basic and acidic residues) spans A1616–P1635. Over residues S1649–G1660 the composition is skewed to low complexity. Residues K1661–K1679 are compositionally biased toward basic residues. A compositionally biased stretch (basic and acidic residues) spans A1680–P1693. Over residues C1718–D1729 the composition is skewed to low complexity. Residues S1730–L1746 show a composition bias toward basic and acidic residues. Coiled coils occupy residues E1796–R1855 and Q1894–D1960. Residues K1816 to A1982 form the bMERB domain.

The protein belongs to the Mical family. FAD serves as cofactor.

The protein localises to the cytoplasm. It localises to the cytoskeleton. The protein resides in the nucleus. It carries out the reaction L-methionyl-[F-actin] + NADPH + O2 + H(+) = L-methionyl-(R)-S-oxide-[F-actin] + NADP(+) + H2O. Functionally, monooxygenase that promotes depolymerization of F-actin by mediating oxidation of specific methionine residues on actin. Acts by modifying actin subunits through the addition of oxygen to form methionine-sulfoxide, leading to promote actin filament severing and prevent repolymerization. Involved in exocytic vesicles tethering and fusion: the monooxygenase activity is required for this process. The protein is Protein-methionine sulfoxide oxidase mical3a (mical3a) of Danio rerio (Zebrafish).